The chain runs to 60 residues: UPF0434 protein Daci_3569 (60 aa).

It belongs to the UPF0434 family.

This Delftia acidovorans (strain DSM 14801 / SPH-1) protein is UPF0434 protein Daci_3569.